Here is a 680-residue protein sequence, read N- to C-terminus: Penicillin-binding protein 2B (680 aa).

Residues 1 to 8 (MRKFNSHS) lie on the Cytoplasmic side of the membrane. The chain crosses the membrane as a helical span at residues 9–29 (IPIRLNLLFSIVILLFMTIIG). At 30–680 (RLLYMQVLNK…NLYQKYHPMN (651 aa)) the chain is on the extracellular side. Residue Ser386 is the Acyl-ester intermediate of the active site.

Belongs to the transpeptidase family. Interacts with MreC in the elongasome.

The protein localises to the cell membrane. Functionally, a transpeptidase that forms peptide cross-links between adjacent glycan strands in cell wall peptidoglycan (PG). Part of the elongasome machinery that synthesizes peripheral PG. This Streptococcus pneumoniae serotype 2 (strain D39 / NCTC 7466) protein is Penicillin-binding protein 2B.